Consider the following 236-residue polypeptide: Purine nucleoside phosphorylase DeoD-type (236 aa).

H4 lines the a purine D-ribonucleoside pocket. Residues G20, R24, R43, and 87-90 each bind phosphate; that span reads RVGT. Residues 179-181 and 203-204 each bind a purine D-ribonucleoside; these read EME and SD. The Proton donor role is filled by D204.

The protein belongs to the PNP/UDP phosphorylase family. Homohexamer; trimer of homodimers.

It carries out the reaction a purine D-ribonucleoside + phosphate = a purine nucleobase + alpha-D-ribose 1-phosphate. It catalyses the reaction a purine 2'-deoxy-D-ribonucleoside + phosphate = a purine nucleobase + 2-deoxy-alpha-D-ribose 1-phosphate. Functionally, catalyzes the reversible phosphorolytic breakdown of the N-glycosidic bond in the beta-(deoxy)ribonucleoside molecules, with the formation of the corresponding free purine bases and pentose-1-phosphate. In Streptococcus pneumoniae serotype 2 (strain D39 / NCTC 7466), this protein is Purine nucleoside phosphorylase DeoD-type.